The chain runs to 205 residues: Lymphotoxin-alpha (205 aa).

A signal peptide spans 1–34; the sequence is MTPPGRLYLPRVRGTRLLFLLLGLLLALPPRAKG. One can recognise a THD domain in the interval 63–205; the sequence is PAAHLVGDPS…SSVFFGAFAL (143 aa). Asparagine 96 carries an N-linked (GlcNAc...) asparagine glycan. Cysteine 120 and cysteine 156 are oxidised to a cystine.

This sequence belongs to the tumor necrosis factor family. In terms of assembly, homotrimer, and heterotrimer of either two LTB and one LTA subunits or (less prevalent) two LTA and one LTB subunits. Interacts with TNFRSF14.

Its subcellular location is the secreted. The protein resides in the membrane. Functionally, cytokine that in its homotrimeric form binds to TNFRSF1A/TNFR1, TNFRSF1B/TNFBR and TNFRSF14/HVEM. In its heterotrimeric form with LTB binds to TNFRSF3/LTBR. Lymphotoxin is produced by lymphocytes and is cytotoxic for a wide range of tumor cells in vitro and in vivo. In Marmota monax (Woodchuck), this protein is Lymphotoxin-alpha (LTA).